A 216-amino-acid polypeptide reads, in one-letter code: DNA gyrase subunit B (216 aa).

In terms of domain architecture, Toprim spans 140–216 (SELYLVEGDS…PDKLRYHKII (77 aa)).

This sequence belongs to the type II topoisomerase GyrB family. In terms of assembly, heterotetramer, composed of two GyrA and two GyrB chains. In the heterotetramer, GyrA contains the active site tyrosine that forms a transient covalent intermediate with DNA, while GyrB binds cofactors and catalyzes ATP hydrolysis.

The protein localises to the cytoplasm. The catalysed reaction is ATP-dependent breakage, passage and rejoining of double-stranded DNA.. In terms of biological role, a type II topoisomerase that negatively supercoils closed circular double-stranded (ds) DNA in an ATP-dependent manner to modulate DNA topology and maintain chromosomes in an underwound state. Negative supercoiling favors strand separation, and DNA replication, transcription, recombination and repair, all of which involve strand separation. Also able to catalyze the interconversion of other topological isomers of dsDNA rings, including catenanes and knotted rings. Type II topoisomerases break and join 2 DNA strands simultaneously in an ATP-dependent manner. This chain is DNA gyrase subunit B (gyrB), found in Acinetobacter sp. (strain T4).